The primary structure comprises 833 residues: ERAD-associated E3 ubiquitin-protein ligase component HRD3 (833 aa).

Positions 1-20 (MITLLLYLCVICNAIVLIRA) are cleaved as a signal peptide. Asn101, Asn123, and Asn142 each carry an N-linked (GlcNAc...) asparagine glycan. Residues 103-139 (SEATYTLSQIHLWSQYNFPHNMTLAHKYLEKFNDLTH) form a Sel1-like 1 repeat. 6 Sel1-like repeats span residues 143–186 (HSAI…QLGN), 187–222 (LKAK…EQLR), 413–445 (GRAC…KTQA), 552–595 (ETAQ…KQGN), 596–627 (IDAG…LKYS), and 628–663 (IQAI…EHDH). Asn429 is a glycosylation site (N-linked (GlcNAc...) asparagine). Residue Asn611 is glycosylated (N-linked (GlcNAc...) asparagine). Residues 768 to 788 (LVTMGCILGIFLLSILMSTLA) form a helical membrane-spanning segment. The disordered stretch occupies residues 805–824 (NGNRQQEQQQQQQAQGPPGW). The span at 809–819 (QQEQQQQQQAQ) shows a compositional bias: low complexity.

Belongs to the sel-1 family. Component of the HRD1 ubiquitin ligase complex which contains the E3 ligase HRD1, its cofactors HRD3, USA1 and DER1, substrate recruiting factor YOS9 and CDC48-binding protein UBX2. Within the complex, interacts directly with HRD1 and YOS9 (via N-terminus). In ERAD-L, HRD3 and YOS9 jointly bind misfolded glycoproteins in the endoplasmic reticulum (ER) lumen. Movement of ERAD-L substrates through the ER membrane is facilitated by HRD1 and DER1 which have lateral gates facing each other and which distort the membrane region between the lateral gates, making it much thinner than a normal phospholipid bilayer. Substrates insert into the membrane as a hairpin loop with one strand interacting with DER1 and the other with HRD1. The HRD1 complex interacts with the heterotrimeric CDC48-NPL4-UFD1 ATPase complex which is recruited by UBX2 via its interaction with CDC48 and which moves ubiquitinated substrates to the cytosol for targeting to the proteasome. The HRD1 complex interacts with the ERAD substrates HMG1 and HMG2. Interacts with KAR2.

It localises to the endoplasmic reticulum membrane. Its function is as follows. Component of the endoplasmic reticulum quality control (ERQC) system involved in ubiquitin-dependent degradation of misfolded endoplasmic reticulum proteins. Component of the HRD1 ubiquitin ligase complex, which is part of the ERAD-L and ERAD-M pathways responsible for the rapid degradation of soluble lumenal and membrane proteins with misfolded lumenal domains (ERAD-L), or ER-membrane proteins with misfolded transmembrane domains (ERAD-M). ERAD-L substrates are ubiquitinated through HRD1 in conjunction with the E2 ubiquitin-conjugating enzymes UBC1 and UBC7-CUE1. Ubiquitinated substrates are then removed to the cytosol via the action of the CDC48-NPL4-UFD1 ATPase complex and targeted to the proteasome. ERAD-M substrates are processed by the same HRD1-HRD3 core complex, but only a subset of the other components is required for ERAD-M. Stabilizes the HRD1 ubiquitin-protein ligase. Also functions in recruiting misfolded protein substrates in conjunction with YOS9. In Saccharomyces cerevisiae (strain ATCC 204508 / S288c) (Baker's yeast), this protein is ERAD-associated E3 ubiquitin-protein ligase component HRD3 (HRD3).